A 430-amino-acid polypeptide reads, in one-letter code: Bone morphogenetic protein 7 (430 aa).

Positions 1 to 29 (MHVRSLRAAAPHSFVALWAPLFLLRSALA) are cleaved as a signal peptide. Residues 30–291 (DFSLDNEVHS…ATEVHLRSIR (262 aa)) constitute a propeptide that is removed on maturation. 4 N-linked (GlcNAc...) asparagine glycosylation sites follow: Asn-186, Asn-301, Asn-320, and Asn-371. The segment at 290 to 310 (IRSTGGKQRSQNRSKTPKNQE) is disordered. 3 cysteine pairs are disulfide-bonded: Cys-329–Cys-395, Cys-358–Cys-427, and Cys-362–Cys-429.

It belongs to the TGF-beta family. In terms of assembly, homodimer; disulfide-linked. Interacts with SOSTDC1. Interacts with TWSG1. Interacts with FBN1 (via N-terminal domain) and FBN2. Interacts with type I receptor ACVR1. Interacts with type II receptor ACVR2A. Interacts with NOG; this interaction inhibits canonical BMP signaling. Interacts with SCUBE3. Interacts with ERFE; the interaction inhibits BMP-induced transcription of HAMP. Interacts with TGFBR3.

The protein resides in the secreted. Its function is as follows. Growth factor of the TGF-beta superfamily that plays important role in various biological processes, including embryogenesis, hematopoiesis, neurogenesis and skeletal morphogenesis. Initiates the canonical BMP signaling cascade by associating with type I receptor ACVR1 and type II receptor ACVR2A. Once all three components are bound together in a complex at the cell surface, ACVR2A phosphorylates and activates ACVR1. In turn, ACVR1 propagates signal by phosphorylating SMAD1/5/8 that travel to the nucleus and act as activators and repressors of transcription of target genes. For specific functions such as growth cone collapse in developing spinal neurons and chemotaxis of monocytes, also uses BMPR2 as type II receptor. Can also signal through non-canonical pathways such as P38 MAP kinase signaling cascade that promotes brown adipocyte differentiation through activation of target genes, including members of the SOX family of transcription factors. Promotes the expression of HAMP, this is repressed by its interaction with ERFE. In Mus musculus (Mouse), this protein is Bone morphogenetic protein 7 (Bmp7).